The sequence spans 278 residues: Pantothenate synthetase (278 aa).

An ATP-binding site is contributed by 26-33 (MGNLHEGH). The active-site Proton donor is His-33. Gln-57 contributes to the (R)-pantoate binding site. Beta-alanine is bound at residue Gln-57. 144–147 (GKKD) serves as a coordination point for ATP. Residue Gln-150 coordinates (R)-pantoate. ATP is bound by residues Gly-173 and 181–184 (LSSR).

The protein belongs to the pantothenate synthetase family. In terms of assembly, homodimer.

The protein resides in the cytoplasm. It catalyses the reaction (R)-pantoate + beta-alanine + ATP = (R)-pantothenate + AMP + diphosphate + H(+). It participates in cofactor biosynthesis; (R)-pantothenate biosynthesis; (R)-pantothenate from (R)-pantoate and beta-alanine: step 1/1. Functionally, catalyzes the condensation of pantoate with beta-alanine in an ATP-dependent reaction via a pantoyl-adenylate intermediate. The chain is Pantothenate synthetase from Neisseria meningitidis serogroup B (strain ATCC BAA-335 / MC58).